The primary structure comprises 509 residues: Lanosterol 14-alpha demethylase (509 aa).

The chain crosses the membrane as a helical span at residues 30 to 50; that stretch reads GNLLSMLLIACAFTLSLVYLI. Cys-455 provides a ligand contact to heme.

Belongs to the cytochrome P450 family. Heme is required as a cofactor. In terms of processing, ubiquitinated by MARCHF6, leading to proteasomal degradation. Ubiquitously expressed with highest levels in testis, ovary, adrenal, prostate, liver, kidney and lung.

It localises to the endoplasmic reticulum membrane. The protein localises to the microsome membrane. The catalysed reaction is a 14alpha-methyl steroid + 3 reduced [NADPH--hemoprotein reductase] + 3 O2 = a Delta(14) steroid + formate + 3 oxidized [NADPH--hemoprotein reductase] + 4 H2O + 4 H(+). It carries out the reaction lanosterol + 3 reduced [NADPH--hemoprotein reductase] + 3 O2 = 4,4-dimethyl-5alpha-cholesta-8,14,24-trien-3beta-ol + formate + 3 oxidized [NADPH--hemoprotein reductase] + 4 H2O + 4 H(+). It catalyses the reaction 24,25-dihydrolanosterol + 3 reduced [NADPH--hemoprotein reductase] + 3 O2 = 4,4-dimethyl-8,14-cholestadien-3beta-ol + formate + 3 oxidized [NADPH--hemoprotein reductase] + 4 H2O + 4 H(+). The enzyme catalyses a 14alpha-methyl steroid + reduced [NADPH--hemoprotein reductase] + O2 = a 14alpha-hydroxymethyl steroid + oxidized [NADPH--hemoprotein reductase] + H2O + H(+). The catalysed reaction is a 14alpha-hydroxymethyl steroid + reduced [NADPH--hemoprotein reductase] + O2 = a 14alpha-formyl steroid + oxidized [NADPH--hemoprotein reductase] + 2 H2O + H(+). It carries out the reaction a 14alpha-formyl steroid + reduced [NADPH--hemoprotein reductase] + O2 = a Delta(14) steroid + formate + oxidized [NADPH--hemoprotein reductase] + H2O + 2 H(+). It catalyses the reaction lanosterol + reduced [NADPH--hemoprotein reductase] + O2 = 32-hydroxylanosterol + oxidized [NADPH--hemoprotein reductase] + H2O + H(+). The enzyme catalyses 32-hydroxylanosterol + reduced [NADPH--hemoprotein reductase] + O2 = 32-oxolanosterol + oxidized [NADPH--hemoprotein reductase] + 2 H2O + H(+). The catalysed reaction is 32-oxolanosterol + reduced [NADPH--hemoprotein reductase] + O2 = 4,4-dimethyl-5alpha-cholesta-8,14,24-trien-3beta-ol + formate + oxidized [NADPH--hemoprotein reductase] + H2O + 2 H(+). It carries out the reaction 24,25-dihydrolanosterol + reduced [NADPH--hemoprotein reductase] + O2 = 32-hydroxy-24,25-dihydrolanosterol + oxidized [NADPH--hemoprotein reductase] + H2O + H(+). It catalyses the reaction 32-hydroxy-24,25-dihydrolanosterol + reduced [NADPH--hemoprotein reductase] + O2 = 32-oxo-24,25-dihydrolanosterol + oxidized [NADPH--hemoprotein reductase] + 2 H2O + H(+). The enzyme catalyses 32-oxo-24,25-dihydrolanosterol + reduced [NADPH--hemoprotein reductase] + O2 = 4,4-dimethyl-8,14-cholestadien-3beta-ol + formate + oxidized [NADPH--hemoprotein reductase] + H2O + 2 H(+). The protein operates within steroid biosynthesis; zymosterol biosynthesis; zymosterol from lanosterol: step 1/6. Its activity is regulated as follows. Inhibited by azalanstat. Inhibited by azole antifungal agents ketoconazole, itraconazole and fluconazole. Its function is as follows. Sterol 14alpha-demethylase that plays a critical role in the cholesterol biosynthesis pathway, being cholesterol the major sterol component in mammalian membranes as well as a precursor for bile acid and steroid hormone synthesis. Cytochrome P450 monooxygenase that catalyzes the three-step oxidative removal of the 14alpha-methyl group (C-32) of sterols such as lanosterol (lanosta-8,24-dien-3beta-ol) and 24,25-dihydrolanosterol (DHL) in the form of formate, and converts the sterols to 4,4-dimethyl-5alpha-cholesta-8,14,24-trien-3beta-ol and 4,4-dimethyl-8,14-cholestadien-3beta-ol, respectively, which are intermediates of cholesterol biosynthesis. Can also demethylate substrates not intrinsic to mammals, such as eburicol (24-methylene-24,25-dihydrolanosterol), but at a lower rate than DHL. This chain is Lanosterol 14-alpha demethylase, found in Homo sapiens (Human).